A 127-amino-acid chain; its full sequence is Arginine decarboxylase proenzyme (127 aa).

The Schiff-base intermediate with substrate; via pyruvic acid role is filled by S72. The residue at position 72 (S72) is a Pyruvic acid (Ser); by autocatalysis. Catalysis depends on H77, which acts as the Proton acceptor; for processing activity. C92 functions as the Proton donor; for catalytic activity in the catalytic mechanism.

This sequence belongs to the prokaryotic AdoMetDC family. Type 1 subfamily. As to quaternary structure, heterooctamer of four alpha and four beta chains arranged as a tetramer of alpha/beta heterodimers. Pyruvate serves as cofactor. In terms of processing, is synthesized initially as an inactive proenzyme. Formation of the active enzyme involves a self-maturation process in which the active site pyruvoyl group is generated from an internal serine residue via an autocatalytic post-translational modification. Two non-identical subunits are generated from the proenzyme in this reaction, and the pyruvate is formed at the N-terminus of the alpha chain, which is derived from the carboxyl end of the proenzyme. The post-translation cleavage follows an unusual pathway, termed non-hydrolytic serinolysis, in which the side chain hydroxyl group of the serine supplies its oxygen atom to form the C-terminus of the beta chain, while the remainder of the serine residue undergoes an oxidative deamination to produce ammonia and the pyruvoyl group blocking the N-terminus of the alpha chain.

The catalysed reaction is L-arginine + H(+) = agmatine + CO2. The protein operates within amine and polyamine biosynthesis; agmatine biosynthesis; agmatine from L-arginine: step 1/1. Specifically catalyzes the decarboxylation of L-arginine to agmatine. Has no S-adenosylmethionine decarboxylase (AdoMetDC) activity. The chain is Arginine decarboxylase proenzyme from Staphylothermus marinus (strain ATCC 43588 / DSM 3639 / JCM 9404 / F1).